Here is a 452-residue protein sequence, read N- to C-terminus: Fructose-2,6-bisphosphatase (452 aa).

The interval 1-223 is 6-phosphofructo-2-kinase; sequence MGYSTISNDN…VFYVMNIRPK (223 aa). 20 to 28 provides a ligand contact to ATP; it reads GLPARGKSF. Residues R53 and R78 each coordinate beta-D-fructose 6-phosphate. The active site involves D104. Residues T106 and R112 each coordinate beta-D-fructose 6-phosphate. An ATP-binding site is contributed by 143–148; it reads NAKDIG. The beta-D-fructose 6-phosphate site is built by R169 and Y173. The tract at residues 224 to 452 is fructose-2,6-bisphosphatase; it reads PKYIWLSRHG…LNDSPLEDKF (229 aa). R231 is a beta-D-fructose 2,6-bisphosphate binding site. H232 acts as the Tele-phosphohistidine intermediate in catalysis. Beta-D-fructose 2,6-bisphosphate-binding residues include N238 and G244. Residue E302 is the Proton donor/acceptor of the active site. Beta-D-fructose 2,6-bisphosphate is bound by residues Y313, R327, K331, Y342, Q368, and R372. Residue 324–327 participates in ATP binding; it reads FKAR. ATP contacts are provided by residues 368 to 372 and Y404; that span reads QAVLR. S435 and S446 each carry phosphoserine.

The protein in the C-terminal section; belongs to the phosphoglycerate mutase family.

The enzyme catalyses beta-D-fructose 2,6-bisphosphate + H2O = beta-D-fructose 6-phosphate + phosphate. With respect to regulation, inhibited by fructose 6-P, activated by glycerol 3-P. Monofunctional, high-specificity fructose-2,6-bisphosphatase, which releases phosphate from the 2-position of fructose 2,6-bisphosphate. Has no detectable 6-phosphofructo-2-kinase activity. The sequence is that of Fructose-2,6-bisphosphatase from Saccharomyces cerevisiae (strain ATCC 204508 / S288c) (Baker's yeast).